Here is a 140-residue protein sequence, read N- to C-terminus: uncharacterized protein (140 aa).

This is an uncharacterized protein from Acholeplasma phage L2 (Bacteriophage L2).